The chain runs to 141 residues: Nucleoside diphosphate kinase (141 aa).

ATP-binding residues include lysine 11, phenylalanine 59, arginine 87, threonine 93, arginine 104, and asparagine 114. Histidine 117 serves as the catalytic Pros-phosphohistidine intermediate.

It belongs to the NDK family. As to quaternary structure, homotetramer. Mg(2+) serves as cofactor.

The protein resides in the cytoplasm. The catalysed reaction is a 2'-deoxyribonucleoside 5'-diphosphate + ATP = a 2'-deoxyribonucleoside 5'-triphosphate + ADP. It catalyses the reaction a ribonucleoside 5'-diphosphate + ATP = a ribonucleoside 5'-triphosphate + ADP. Major role in the synthesis of nucleoside triphosphates other than ATP. The ATP gamma phosphate is transferred to the NDP beta phosphate via a ping-pong mechanism, using a phosphorylated active-site intermediate. The sequence is that of Nucleoside diphosphate kinase from Polaromonas sp. (strain JS666 / ATCC BAA-500).